The following is a 482-amino-acid chain: Cobyrinate a,c-diamide synthase (482 aa).

The region spanning 248–441 is the GATase cobBQ-type domain; sequence RLAIAQDQAF…LHLHWGSQIS (194 aa). Residue cysteine 331 is the Nucleophile of the active site.

Belongs to the CobB/CbiA family. Mg(2+) serves as cofactor.

It carries out the reaction cob(II)yrinate + 2 L-glutamine + 2 ATP + 2 H2O = cob(II)yrinate a,c diamide + 2 L-glutamate + 2 ADP + 2 phosphate + 2 H(+). Its pathway is cofactor biosynthesis; adenosylcobalamin biosynthesis; cob(II)yrinate a,c-diamide from sirohydrochlorin (anaerobic route): step 10/10. In terms of biological role, catalyzes the ATP-dependent amidation of the two carboxylate groups at positions a and c of cobyrinate, using either L-glutamine or ammonia as the nitrogen source. The polypeptide is Cobyrinate a,c-diamide synthase (Synechocystis sp. (strain ATCC 27184 / PCC 6803 / Kazusa)).